The chain runs to 282 residues: Bifunctional protein FolD (282 aa).

NADP(+)-binding positions include G165 to S167 and I231.

The protein belongs to the tetrahydrofolate dehydrogenase/cyclohydrolase family. In terms of assembly, homodimer.

The enzyme catalyses (6R)-5,10-methylene-5,6,7,8-tetrahydrofolate + NADP(+) = (6R)-5,10-methenyltetrahydrofolate + NADPH. It carries out the reaction (6R)-5,10-methenyltetrahydrofolate + H2O = (6R)-10-formyltetrahydrofolate + H(+). Its pathway is one-carbon metabolism; tetrahydrofolate interconversion. Catalyzes the oxidation of 5,10-methylenetetrahydrofolate to 5,10-methenyltetrahydrofolate and then the hydrolysis of 5,10-methenyltetrahydrofolate to 10-formyltetrahydrofolate. This Francisella tularensis subsp. tularensis (strain FSC 198) protein is Bifunctional protein FolD.